A 412-amino-acid polypeptide reads, in one-letter code: Protein png-1 (412 aa).

Zn(2+)-binding residues include cysteine 150, cysteine 153, cysteine 182, and cysteine 185. Positions 363–412 (AAAARGGRSSPDNKSGANMMGSPATGDIKRPIPEDAPVPDVPSLWPTYGP) are disordered.

It belongs to the transglutaminase-like superfamily. PNGase family.

The polypeptide is Protein png-1 (un-7) (Neurospora crassa (strain ATCC 24698 / 74-OR23-1A / CBS 708.71 / DSM 1257 / FGSC 987)).